Reading from the N-terminus, the 189-residue chain is UPF0312 protein VC0395_0473/VC395_A0785 (189 aa).

An N-terminal signal peptide occupies residues 1–22; it reads MKKTLMAVGLAAVISIPFAANA.

Belongs to the UPF0312 family. Type 1 subfamily.

It is found in the periplasm. The sequence is that of UPF0312 protein VC0395_0473/VC395_A0785 from Vibrio cholerae serotype O1 (strain ATCC 39541 / Classical Ogawa 395 / O395).